Reading from the N-terminus, the 24-residue chain is Humanin-like 6 (24 aa).

The protein belongs to the humanin family. In terms of tissue distribution, expressed in skeletal muscle and testis.

The protein localises to the secreted. It localises to the cytoplasm. Functionally, plays a role as a neuroprotective and antiapoptotic factor. This is Humanin-like 6 from Homo sapiens (Human).